We begin with the raw amino-acid sequence, 124 residues long: CLAVATA3/ESR (CLE)-related protein 45 (124 aa).

The N-terminal stretch at 1–20 (MLGSSTRSMFFLLVCIGLLA) is a signal peptide. Asn25 and Asn96 each carry an N-linked (GlcNAc...) asparagine glycan. Residues 71–109 (LNKNRRVLEEVNKDKIKAEETQERKNKTEDSFKSSKRRV) are a coiled coil. Basic and acidic residues predominate over residues 87–103 (KAEETQERKNKTEDSFK). The interval 87-124 (KAEETQERKNKTEDSFKSSKRRVRRGSDPIHNKAQPFS) is disordered.

The protein belongs to the CLV3/ESR signal peptide family. Binds to SKM1 present in the pollen grain, particularly under relatively high temperature (at 30 degrees Celsius). Interacts with BAM3, especially in roots. In terms of tissue distribution, expressed at low levels in flowers, especially in pistils. Present in vascular tissues. In roots, confined to protophloem and sieve element precursor cells.

Its subcellular location is the secreted. The protein resides in the extracellular space. Its function is as follows. Extracellular signal peptide that regulates cell fate. Represses root apical meristem maintenance. Represses protophloem differentiation in a BAM3-dependent manner. BRX, BAM3, and CLE45 act together to regulate the transition of protophloem cells from proliferation to differentiation, thus impinging on postembryonic growth capacity of the root meristem; this signaling pathway requires CRN and CLV2 and involves MAKR5 for its transduction/amplification. Triggers the accumulation of MAKR5 in developing sieve elements in a BAM3-dependent manner. Prevents, in a dose-dependent manner, auxin response in the root meristem thus leading in the repression of protophloem differentiation and periclinal sieve element precursor cell division. Promotes pollen tube growth prolongation in a SKM1 and SKM2-dependent manner, especially under relatively high temperature (at 30 degrees Celsius), thus conferring tolerance against high temperature probably through the maintenance of mitochondrial activity. Alleviates mitochondrial decay pollen tube in vitro culture. This is CLAVATA3/ESR (CLE)-related protein 45 from Arabidopsis thaliana (Mouse-ear cress).